The primary structure comprises 514 residues: Type-2 serine--tRNA ligase (514 aa).

Ala-313 is a binding site for L-serine. Cys-315 contacts Zn(2+). An L-serine-binding site is contributed by Arg-344. ATP is bound by residues Arg-344 to Glu-346 and Arg-355 to Val-356. Arg-361–Glu-363 is a binding site for L-serine. Zn(2+) is bound by residues Glu-363 and Cys-470. Position 477 (Arg-477) interacts with ATP.

The protein belongs to the class-II aminoacyl-tRNA synthetase family. Type-2 seryl-tRNA synthetase subfamily. Homodimer. It depends on Zn(2+) as a cofactor.

It localises to the cytoplasm. The enzyme catalyses tRNA(Ser) + L-serine + ATP = L-seryl-tRNA(Ser) + AMP + diphosphate + H(+). It carries out the reaction tRNA(Sec) + L-serine + ATP = L-seryl-tRNA(Sec) + AMP + diphosphate + H(+). It functions in the pathway aminoacyl-tRNA biosynthesis; selenocysteinyl-tRNA(Sec) biosynthesis; L-seryl-tRNA(Sec) from L-serine and tRNA(Sec): step 1/1. Its function is as follows. Catalyzes the attachment of serine to tRNA(Ser). Is also able to aminoacylate tRNA(Sec) with serine, to form the misacylated tRNA L-seryl-tRNA(Sec), which will be further converted into selenocysteinyl-tRNA(Sec). This Methanococcus maripaludis (strain C5 / ATCC BAA-1333) protein is Type-2 serine--tRNA ligase.